The chain runs to 477 residues: MSKVLTSLPVGQRVGIAFSGGLDTSVAVAWMRDKGAIPCTYTADIGQYDEPDVSGVPARAREYGAEIARVVDCRAQLVEEGLAALACGAFHIRSGGRIYFNTTPLGRAVTGTILVRAMHEDGVDIWGDGSTFKGNDIERFYRYGLLANPQLRIYKPWLDPDFVHELGGRTEMSQWLTSHGLPYRDSQEKAYSTDANIWGATHEAKTLEHLDTSLEVVTPIMGVRFWDPAVDIATEDVTVAFEQGRPVALNGRRFDDPVELVEEANAIGGRHGLGMSDQIENRIIEAKSRGVYEAPGMALLWLTYERLMNAIHNEDTLANYQISGRRLGRLLYEGRWLDPQALMLRESIQRWVASVVTGEVTVRLRRGEDYTIVRTEGPALSYHPEKLSMERTSNSAFGPTDRIGQLTMRNLDIADSRAMLEMYAGQPLDQGQVLVENGTLFGELPSGGFDQITENPEVQAEPEEEALDAAAMEAGTD.

Residues 17-25 (AFSGGLDTS) and Ala43 contribute to the ATP site. An L-citrulline-binding site is contributed by Tyr99. Positions 129 and 131 each coordinate ATP. Residues Thr131, Asn135, and Asp136 each coordinate L-aspartate. Residue Asn135 participates in L-citrulline binding. Asp136 lines the ATP pocket. L-citrulline-binding residues include Arg139 and Ser192. Asp194 lines the ATP pocket. Residues Thr201, Glu203, and Glu280 each coordinate L-citrulline. Positions 450–477 (DQITENPEVQAEPEEEALDAAAMEAGTD) are disordered. A compositionally biased stretch (low complexity) spans 468–477 (DAAAMEAGTD).

It belongs to the argininosuccinate synthase family. Type 2 subfamily. Homotetramer.

The protein localises to the cytoplasm. It catalyses the reaction L-citrulline + L-aspartate + ATP = 2-(N(omega)-L-arginino)succinate + AMP + diphosphate + H(+). The protein operates within amino-acid biosynthesis; L-arginine biosynthesis; L-arginine from L-ornithine and carbamoyl phosphate: step 2/3. The polypeptide is Argininosuccinate synthase (Nocardioides sp. (strain ATCC BAA-499 / JS614)).